An 81-amino-acid polypeptide reads, in one-letter code: Small ribosomal subunit protein bS16 (81 aa).

It belongs to the bacterial ribosomal protein bS16 family.

In Caldicellulosiruptor saccharolyticus (strain ATCC 43494 / DSM 8903 / Tp8T 6331), this protein is Small ribosomal subunit protein bS16.